The sequence spans 192 residues: Ras-like GTP-binding protein O-RHO (192 aa).

12 to 19 (GDGACGKT) contributes to the GTP binding site. Positions 34–42 (YVPTVFENY) match the Effector region motif. Residues 59-63 (DTAGQ) and 117-120 (NKKT) contribute to the GTP site. At C189 the chain carries Cysteine methyl ester. Residue C189 is the site of S-geranylgeranyl cysteine attachment. A propeptide spans 190-192 (LLL) (removed in mature form).

This sequence belongs to the small GTPase superfamily. Rho family.

It is found in the cell membrane. The polypeptide is Ras-like GTP-binding protein O-RHO (Diplobatis ommata (Ocellated electric ray)).